The following is a 590-amino-acid chain: DNA mismatch repair protein MutL (590 aa).

The segment covering P335 to A351 has biased composition (polar residues). The tract at residues P335–H354 is disordered.

It belongs to the DNA mismatch repair MutL/HexB family.

In terms of biological role, this protein is involved in the repair of mismatches in DNA. It is required for dam-dependent methyl-directed DNA mismatch repair. May act as a 'molecular matchmaker', a protein that promotes the formation of a stable complex between two or more DNA-binding proteins in an ATP-dependent manner without itself being part of a final effector complex. This chain is DNA mismatch repair protein MutL, found in Dichelobacter nodosus (strain VCS1703A).